A 241-amino-acid polypeptide reads, in one-letter code: Chlorophyll a-b binding protein 6, chloroplastic (241 aa).

Residues 1–35 constitute a chloroplast transit peptide; sequence MASNSLMSCGIAAVYPSLLSSSKSKFVSAGVPLPN. Trp48 contacts chlorophyll b. 3 residues coordinate chlorophyll a: Phe68, Glu87, and His90. Arg92 lines the chlorophyll b pocket. The chain crosses the membrane as a helical span at residues 93–113; the sequence is WAMLAVPGILVPEALGYGNWV. Chlorophyll a is bound at residue Leu129. The chain crosses the membrane as a helical span at residues 132–152; the sequence is PVPWGTLPTILAIEFLAIAFV. Residues Val133, Glu153, and Arg156 each coordinate chlorophyll b. 6 residues coordinate chlorophyll a: Lys190, Glu191, Asn194, Arg196, Gln208, and His224. Residues 197-217 traverse the membrane as a helical segment; it reads LALLAFVGFCVQQSAYPGTGP.

It belongs to the light-harvesting chlorophyll a/b-binding (LHC) protein family. The LHC complex consists of chlorophyll a-b binding proteins. Red-emitting heterodimer with LHCA4. Interacts with LHCA5. The cofactor is Binds at least 14 chlorophylls (8 Chl-a and 6 Chl-b) and carotenoids such as lutein and neoxanthin.. Photoregulated by reversible phosphorylation of its threonine residues.

Its subcellular location is the plastid. It localises to the chloroplast thylakoid membrane. The light-harvesting complex (LHC) functions as a light receptor, it captures and delivers excitation energy to photosystems with which it is closely associated. The chain is Chlorophyll a-b binding protein 6, chloroplastic from Arabidopsis thaliana (Mouse-ear cress).